A 295-amino-acid polypeptide reads, in one-letter code: Small ribosomal subunit biogenesis GTPase RsgA (295 aa).

Residues 68–228 form the CP-type G domain; it reads KNLLVKPHVA…VVDTPGFANL (161 aa). GTP contacts are provided by residues 117–120 and 170–178; these read NKMD and GLSGVGKSS. Zn(2+)-binding residues include Cys250, Cys255, His257, and Cys263.

This sequence belongs to the TRAFAC class YlqF/YawG GTPase family. RsgA subfamily. Monomer. Associates with 30S ribosomal subunit, binds 16S rRNA. It depends on Zn(2+) as a cofactor.

Its subcellular location is the cytoplasm. In terms of biological role, one of several proteins that assist in the late maturation steps of the functional core of the 30S ribosomal subunit. Helps release RbfA from mature subunits. May play a role in the assembly of ribosomal proteins into the subunit. Circularly permuted GTPase that catalyzes slow GTP hydrolysis, GTPase activity is stimulated by the 30S ribosomal subunit. The chain is Small ribosomal subunit biogenesis GTPase RsgA from Thermotoga neapolitana (strain ATCC 49049 / DSM 4359 / NBRC 107923 / NS-E).